A 372-amino-acid polypeptide reads, in one-letter code: Dual-specificity RNA methyltransferase RlmN (372 aa).

Residue Glu94 is the Proton acceptor of the active site. The Radical SAM core domain occupies Asp100–Asp339. An intrachain disulfide couples Cys107 to Cys344. [4Fe-4S] cluster contacts are provided by Cys114, Cys118, and Cys121. Residues Gly168 to Glu169, Ser200, Ser222 to His224, and Asn301 each bind S-adenosyl-L-methionine. Cys344 acts as the S-methylcysteine intermediate in catalysis.

The protein belongs to the radical SAM superfamily. RlmN family. It depends on [4Fe-4S] cluster as a cofactor.

It is found in the cytoplasm. The catalysed reaction is adenosine(2503) in 23S rRNA + 2 reduced [2Fe-2S]-[ferredoxin] + 2 S-adenosyl-L-methionine = 2-methyladenosine(2503) in 23S rRNA + 5'-deoxyadenosine + L-methionine + 2 oxidized [2Fe-2S]-[ferredoxin] + S-adenosyl-L-homocysteine. It catalyses the reaction adenosine(37) in tRNA + 2 reduced [2Fe-2S]-[ferredoxin] + 2 S-adenosyl-L-methionine = 2-methyladenosine(37) in tRNA + 5'-deoxyadenosine + L-methionine + 2 oxidized [2Fe-2S]-[ferredoxin] + S-adenosyl-L-homocysteine. Its function is as follows. Specifically methylates position 2 of adenine 2503 in 23S rRNA and position 2 of adenine 37 in tRNAs. m2A2503 modification seems to play a crucial role in the proofreading step occurring at the peptidyl transferase center and thus would serve to optimize ribosomal fidelity. The chain is Dual-specificity RNA methyltransferase RlmN from Aliivibrio fischeri (strain ATCC 700601 / ES114) (Vibrio fischeri).